The following is a 341-amino-acid chain: Beta-hexosaminidase (341 aa).

Residues aspartate 61, arginine 69, arginine 134, and 164-165 contribute to the substrate site; that span reads KH. Histidine 177 (proton donor/acceptor) is an active-site residue. The active-site Nucleophile is aspartate 249.

This sequence belongs to the glycosyl hydrolase 3 family. NagZ subfamily.

Its subcellular location is the cytoplasm. It carries out the reaction Hydrolysis of terminal non-reducing N-acetyl-D-hexosamine residues in N-acetyl-beta-D-hexosaminides.. Its pathway is cell wall biogenesis; peptidoglycan recycling. Plays a role in peptidoglycan recycling by cleaving the terminal beta-1,4-linked N-acetylglucosamine (GlcNAc) from peptide-linked peptidoglycan fragments, giving rise to free GlcNAc, anhydro-N-acetylmuramic acid and anhydro-N-acetylmuramic acid-linked peptides. This chain is Beta-hexosaminidase, found in Shewanella frigidimarina (strain NCIMB 400).